The chain runs to 284 residues: Phosphonates import ATP-binding protein PhnC 1 (284 aa).

An ABC transporter domain is found at 5 to 253; the sequence is IEVRGLSKSF…MLRDLYGSEA (249 aa). 38-45 contributes to the ATP binding site; that stretch reads GASGSGKS.

This sequence belongs to the ABC transporter superfamily. Phosphonates importer (TC 3.A.1.9.1) family. As to quaternary structure, the complex is composed of two ATP-binding proteins (PhnC), two transmembrane proteins (PhnE) and a solute-binding protein (PhnD).

The protein localises to the cell inner membrane. It carries out the reaction phosphonate(out) + ATP + H2O = phosphonate(in) + ADP + phosphate + H(+). Part of the ABC transporter complex PhnCDE involved in phosphonates import. Responsible for energy coupling to the transport system. In Cupriavidus metallidurans (strain ATCC 43123 / DSM 2839 / NBRC 102507 / CH34) (Ralstonia metallidurans), this protein is Phosphonates import ATP-binding protein PhnC 1.